Reading from the N-terminus, the 199-residue chain is CASP-like protein 4B1 (199 aa).

A disordered region spans residues 1 to 32 (MAMVASPDDIVKSPLPPPPPPPPPPLPPAHKD). The Cytoplasmic segment spans residues 1–53 (MAMVASPDDIVKSPLPPPPPPPPPPLPPAHKDKAAYNPYSGCPAHGGDDGLDG). The span at 14–28 (PLPPPPPPPPPPLPP) shows a compositional bias: pro residues. Residues 54–74 (IVLVLRAAAALLALVAMALVA) form a helical membrane-spanning segment. At 75–91 (SCRHGDWMEFTRYQEYR) the chain is on the extracellular side. The chain crosses the membrane as a helical span at residues 92–112 (YLLGVAVVASLYSALQAARTF). Residues 113–127 (RRMRAGTAYAATFLD) lie on the Cytoplasmic side of the membrane. The chain crosses the membrane as a helical span at residues 128-148 (FAGDQAVGYLLITASSAALPI). The Extracellular segment spans residues 149–163 (TIRMRSAVVNTFTDV). Residues 164-184 (VAASISFAFLAFAALAFSALI) form a helical membrane-spanning segment. Topologically, residues 185-199 (AGFRLSSSSSSAYNY) are cytoplasmic.

It belongs to the Casparian strip membrane proteins (CASP) family. In terms of assembly, homodimer and heterodimers.

It localises to the cell membrane. The polypeptide is CASP-like protein 4B1 (Oryza sativa subsp. japonica (Rice)).